The chain runs to 265 residues: Undecaprenyl-diphosphatase (265 aa).

The next 7 membrane-spanning stretches (helical) occupy residues 42–62 (ATTF…VLYW), 82–102 (GIML…AAHS), 108–128 (LFTP…MLLV), 143–163 (MSPA…WPGF), 181–201 (GLAA…ATGY), 221–241 (GFVV…ALVG), and 248–264 (FAWY…YFMA).

It belongs to the UppP family.

It is found in the cell inner membrane. The catalysed reaction is di-trans,octa-cis-undecaprenyl diphosphate + H2O = di-trans,octa-cis-undecaprenyl phosphate + phosphate + H(+). Catalyzes the dephosphorylation of undecaprenyl diphosphate (UPP). Confers resistance to bacitracin. The protein is Undecaprenyl-diphosphatase of Nitratidesulfovibrio vulgaris (strain ATCC 29579 / DSM 644 / CCUG 34227 / NCIMB 8303 / VKM B-1760 / Hildenborough) (Desulfovibrio vulgaris).